A 242-amino-acid chain; its full sequence is Protein ABHD14A (242 aa).

Residues 6–26 (AALLGLGLLLMFLLYMGLPGP) form a helical; Signal-anchor for type II membrane protein membrane-spanning segment. An N-linked (GlcNAc...) asparagine glycan is attached at Asn38. Catalysis depends on charge relay system residues Ser142, Asp193, and His220.

The protein belongs to the AB hydrolase superfamily. ABHD14 family.

Its subcellular location is the cytoplasm. The protein localises to the membrane. Possible role in granule neuron development. The chain is Protein ABHD14A from Rattus norvegicus (Rat).